Here is a 125-residue protein sequence, read N- to C-terminus: Oxytocin-neurophysin 1 (125 aa).

The N-terminal stretch at 1 to 19 is a signal peptide; it reads MAGSSLACCLLGLLALTSA. A disulfide bridge connects residues C20 and C25. Glycine amide is present on G28. Intrachain disulfides connect C41-C85, C44-C58, C52-C75, C59-C65, C92-C104, C98-C116, and C105-C110.

This sequence belongs to the vasopressin/oxytocin family. As to quaternary structure, interacts with oxytocin receptor (Ki=1.5 nM). Interacts with vasopressin V1aR/AVPR1A (Ki=37 nM), V1bR/AVPR1B (Ki=222 nM), and V2R/AVPR2 receptors (Ki=823 nM).

Functionally, neurophysin 1 specifically binds oxytocin. In terms of biological role, oxytocin causes contraction of the smooth muscle of the uterus and of the mammary gland. Acts by binding to oxytocin receptor (OXTR). The sequence is that of Oxytocin-neurophysin 1 (OXT) from Ovis aries (Sheep).